Consider the following 404-residue polypeptide: Imidazolonepropionase (404 aa).

Residues H70 and H72 each coordinate Fe(3+). H70 and H72 together coordinate Zn(2+). Positions 79, 142, and 174 each coordinate 4-imidazolone-5-propanoate. Position 142 (Y142) interacts with N-formimidoyl-L-glutamate. Residue H234 coordinates Fe(3+). A Zn(2+)-binding site is contributed by H234. Residue E237 coordinates 4-imidazolone-5-propanoate. Residue D308 participates in Fe(3+) binding. D308 lines the Zn(2+) pocket.

It belongs to the metallo-dependent hydrolases superfamily. HutI family. Zn(2+) is required as a cofactor. The cofactor is Fe(3+).

It is found in the cytoplasm. The enzyme catalyses 4-imidazolone-5-propanoate + H2O = N-formimidoyl-L-glutamate. It functions in the pathway amino-acid degradation; L-histidine degradation into L-glutamate; N-formimidoyl-L-glutamate from L-histidine: step 3/3. Its function is as follows. Catalyzes the hydrolytic cleavage of the carbon-nitrogen bond in imidazolone-5-propanoate to yield N-formimidoyl-L-glutamate. It is the third step in the universal histidine degradation pathway. The protein is Imidazolonepropionase of Thermoplasma volcanium (strain ATCC 51530 / DSM 4299 / JCM 9571 / NBRC 15438 / GSS1).